A 660-amino-acid chain; its full sequence is Septation initiation protein sid4 (660 aa).

3 disordered regions span residues 79 to 243 (TKKE…QQHF), 368 to 396 (STTV…PDTK), and 459 to 503 (RHTS…PAKN). Composition is skewed to polar residues over residues 125-138 (SFNS…STPY), 156-176 (SNSP…QSPK), and 222-243 (RPNQ…QQHF). Positions 384-396 (STKDFKEQKPDTK) are enriched in basic and acidic residues. Composition is skewed to polar residues over residues 459–480 (RHTS…ITTK) and 488–497 (KENTMLNDGS).

In terms of assembly, homodimer. Interacts with cdc11, sad1, plo1 and dma1.

It is found in the cytoplasm. The protein localises to the cytoskeleton. It localises to the microtubule organizing center. Its subcellular location is the spindle pole body. Functionally, required for activation of the spg1 GTPase signaling cascade which leads to the initiation of septation and the subsequent termination of mitosis. May act as a scaffold at the spindle pole body to which other components of the spg1 signaling cascade attach. This Schizosaccharomyces pombe (strain 972 / ATCC 24843) (Fission yeast) protein is Septation initiation protein sid4 (sid4).